Consider the following 88-residue polypeptide: UPF0250 protein Sputcn32_2874 (88 aa).

It belongs to the UPF0250 family.

The chain is UPF0250 protein Sputcn32_2874 from Shewanella putrefaciens (strain CN-32 / ATCC BAA-453).